The primary structure comprises 140 residues: Nucleoside diphosphate kinase (140 aa).

ATP is bound by residues lysine 11, phenylalanine 59, arginine 87, threonine 93, arginine 104, and asparagine 114. Histidine 117 functions as the Pros-phosphohistidine intermediate in the catalytic mechanism.

Belongs to the NDK family. In terms of assembly, homotetramer. Mg(2+) is required as a cofactor.

Its subcellular location is the cytoplasm. The catalysed reaction is a 2'-deoxyribonucleoside 5'-diphosphate + ATP = a 2'-deoxyribonucleoside 5'-triphosphate + ADP. It catalyses the reaction a ribonucleoside 5'-diphosphate + ATP = a ribonucleoside 5'-triphosphate + ADP. In terms of biological role, major role in the synthesis of nucleoside triphosphates other than ATP. The ATP gamma phosphate is transferred to the NDP beta phosphate via a ping-pong mechanism, using a phosphorylated active-site intermediate. This chain is Nucleoside diphosphate kinase, found in Erythrobacter litoralis (strain HTCC2594).